The following is a 549-amino-acid chain: Glucose-6-phosphate isomerase (549 aa).

Glu353 acts as the Proton donor in catalysis. Active-site residues include His384 and Lys512.

This sequence belongs to the GPI family.

It localises to the cytoplasm. It catalyses the reaction alpha-D-glucose 6-phosphate = beta-D-fructose 6-phosphate. It participates in carbohydrate biosynthesis; gluconeogenesis. It functions in the pathway carbohydrate degradation; glycolysis; D-glyceraldehyde 3-phosphate and glycerone phosphate from D-glucose: step 2/4. Catalyzes the reversible isomerization of glucose-6-phosphate to fructose-6-phosphate. This Alteromonas mediterranea (strain DSM 17117 / CIP 110805 / LMG 28347 / Deep ecotype) protein is Glucose-6-phosphate isomerase.